Reading from the N-terminus, the 327-residue chain is Malate dehydrogenase (327 aa).

11–17 (GAAGQIG) is a binding site for NAD(+). The substrate site is built by R92 and R98. NAD(+) is bound by residues N105, Q112, and 129 to 131 (VGN). 2 residues coordinate substrate: N131 and R162. The Proton acceptor role is filled by H187.

Belongs to the LDH/MDH superfamily. MDH type 2 family.

It catalyses the reaction (S)-malate + NAD(+) = oxaloacetate + NADH + H(+). Functionally, catalyzes the reversible oxidation of malate to oxaloacetate. The protein is Malate dehydrogenase of Thermus thermophilus (strain ATCC BAA-163 / DSM 7039 / HB27).